A 256-amino-acid chain; its full sequence is Trans-aconitate 2-methyltransferase (256 aa).

The protein belongs to the methyltransferase superfamily. Tam family.

It localises to the cytoplasm. The enzyme catalyses trans-aconitate + S-adenosyl-L-methionine = (E)-3-(methoxycarbonyl)pent-2-enedioate + S-adenosyl-L-homocysteine. In terms of biological role, catalyzes the S-adenosylmethionine monomethyl esterification of trans-aconitate. The protein is Trans-aconitate 2-methyltransferase of Agrobacterium fabrum (strain C58 / ATCC 33970) (Agrobacterium tumefaciens (strain C58)).